The chain runs to 310 residues: Olfactory receptor 5P54 (310 aa).

The Extracellular segment spans residues Met1–Ile25. N-linked (GlcNAc...) asparagine glycosylation is present at Asn5. A helical membrane pass occupies residues Ala26–Ile46. The Cytoplasmic portion of the chain corresponds to Thr47–Gln54. Residues Leu55–Thr75 form a helical membrane-spanning segment. The Extracellular segment spans residues Leu76–Ala99. Cys97 and Cys189 are disulfide-bonded. A helical membrane pass occupies residues Glu100–Tyr120. The Cytoplasmic portion of the chain corresponds to Asp121–Ser133. A helical membrane pass occupies residues Thr134–Met154. Residues Asn155 to Gly196 lie on the Extracellular side of the membrane. Asn165 carries N-linked (GlcNAc...) asparagine glycosylation. A helical membrane pass occupies residues Ile197–Phe217. The Cytoplasmic segment spans residues Tyr218–Ala237. Residues Phe238–Ile258 traverse the membrane as a helical segment. At Tyr259–Asn271 the chain is on the extracellular side. Residue Asn265 is glycosylated (N-linked (GlcNAc...) asparagine). A helical membrane pass occupies residues Lys272–Leu292. Over Lys293–Thr310 the chain is Cytoplasmic.

It belongs to the G-protein coupled receptor 1 family.

Its subcellular location is the cell membrane. Functionally, potential odorant receptor. This is Olfactory receptor 5P54 from Mus musculus (Mouse).